The primary structure comprises 487 residues: Protein nucleotidyltransferase YdiU (487 aa).

ATP contacts are provided by glycine 90, glycine 92, arginine 93, lysine 113, aspartate 125, glycine 126, arginine 176, and arginine 183. Catalysis depends on aspartate 252, which acts as the Proton acceptor. 2 residues coordinate Mg(2+): asparagine 253 and aspartate 262. Residue aspartate 262 participates in ATP binding.

Belongs to the SELO family. The cofactor is Mg(2+). It depends on Mn(2+) as a cofactor.

It carries out the reaction L-seryl-[protein] + ATP = 3-O-(5'-adenylyl)-L-seryl-[protein] + diphosphate. It catalyses the reaction L-threonyl-[protein] + ATP = 3-O-(5'-adenylyl)-L-threonyl-[protein] + diphosphate. The catalysed reaction is L-tyrosyl-[protein] + ATP = O-(5'-adenylyl)-L-tyrosyl-[protein] + diphosphate. The enzyme catalyses L-histidyl-[protein] + UTP = N(tele)-(5'-uridylyl)-L-histidyl-[protein] + diphosphate. It carries out the reaction L-seryl-[protein] + UTP = O-(5'-uridylyl)-L-seryl-[protein] + diphosphate. It catalyses the reaction L-tyrosyl-[protein] + UTP = O-(5'-uridylyl)-L-tyrosyl-[protein] + diphosphate. In terms of biological role, nucleotidyltransferase involved in the post-translational modification of proteins. It can catalyze the addition of adenosine monophosphate (AMP) or uridine monophosphate (UMP) to a protein, resulting in modifications known as AMPylation and UMPylation. This chain is Protein nucleotidyltransferase YdiU, found in Pseudomonas syringae pv. tomato (strain ATCC BAA-871 / DC3000).